Here is a 335-residue protein sequence, read N- to C-terminus: N-acetyl-gamma-glutamyl-phosphate reductase (335 aa).

Cys-147 is a catalytic residue.

This sequence belongs to the NAGSA dehydrogenase family. Type 1 subfamily.

It localises to the cytoplasm. The enzyme catalyses N-acetyl-L-glutamate 5-semialdehyde + phosphate + NADP(+) = N-acetyl-L-glutamyl 5-phosphate + NADPH + H(+). Its pathway is amino-acid biosynthesis; L-arginine biosynthesis; N(2)-acetyl-L-ornithine from L-glutamate: step 3/4. Functionally, catalyzes the NADPH-dependent reduction of N-acetyl-5-glutamyl phosphate to yield N-acetyl-L-glutamate 5-semialdehyde. This chain is N-acetyl-gamma-glutamyl-phosphate reductase, found in Campylobacter hominis (strain ATCC BAA-381 / DSM 21671 / CCUG 45161 / LMG 19568 / NCTC 13146 / CH001A).